The primary structure comprises 80 residues: Putative antitoxin VapB44 (80 aa).

The interval 40-68 is disordered; that stretch reads NQNPQPAASQEDAFHGFEPLPHRGGAVSN.

Possibly the antitoxin component of a type II toxin-antitoxin (TA) system. Its cognate toxin is VapC44 (Potential). The sequence is that of Putative antitoxin VapB44 (vapB44) from Mycobacterium tuberculosis (strain CDC 1551 / Oshkosh).